The chain runs to 374 residues: Chaperone protein DnaJ (374 aa).

The 65-residue stretch at 3–67 (DFYQILGVSR…ETRARYDQFG (65 aa)) folds into the J domain. Residues 99 to 118 (GQSSQGGRSQRRGPQQGDDL) are disordered. Low complexity predominate over residues 103 to 115 (QGGRSQRRGPQQG). The CR-type zinc-finger motif lies at 132-214 (GQQREINIPH…CGGNGVKQVR (83 aa)). 8 residues coordinate Zn(2+): Cys-145, Cys-148, Cys-162, Cys-165, Cys-188, Cys-191, Cys-202, and Cys-205. CXXCXGXG motif repeat units lie at residues 145–152 (CEVCRGTG), 162–169 (CTTCGGSG), 188–195 (CPTCNGVG), and 202–209 (CTSCGGNG).

It belongs to the DnaJ family. As to quaternary structure, homodimer. It depends on Zn(2+) as a cofactor.

Its subcellular location is the cytoplasm. In terms of biological role, participates actively in the response to hyperosmotic and heat shock by preventing the aggregation of stress-denatured proteins and by disaggregating proteins, also in an autonomous, DnaK-independent fashion. Unfolded proteins bind initially to DnaJ; upon interaction with the DnaJ-bound protein, DnaK hydrolyzes its bound ATP, resulting in the formation of a stable complex. GrpE releases ADP from DnaK; ATP binding to DnaK triggers the release of the substrate protein, thus completing the reaction cycle. Several rounds of ATP-dependent interactions between DnaJ, DnaK and GrpE are required for fully efficient folding. Also involved, together with DnaK and GrpE, in the DNA replication of plasmids through activation of initiation proteins. The polypeptide is Chaperone protein DnaJ (Prochlorococcus marinus subsp. pastoris (strain CCMP1986 / NIES-2087 / MED4)).